A 338-amino-acid polypeptide reads, in one-letter code: Ferrochelatase (338 aa).

Positions 189 and 294 each coordinate Fe cation.

Belongs to the ferrochelatase family.

The protein resides in the cytoplasm. It carries out the reaction heme b + 2 H(+) = protoporphyrin IX + Fe(2+). Its pathway is porphyrin-containing compound metabolism; protoheme biosynthesis; protoheme from protoporphyrin-IX: step 1/1. Catalyzes the ferrous insertion into protoporphyrin IX. The protein is Ferrochelatase of Pseudomonas putida (strain ATCC 700007 / DSM 6899 / JCM 31910 / BCRC 17059 / LMG 24140 / F1).